A 203-amino-acid polypeptide reads, in one-letter code: Orotate phosphoribosyltransferase (203 aa).

5-phospho-alpha-D-ribose 1-diphosphate contacts are provided by residues R94, K98, H100, and 120 to 128 (EDLISTGGS). Orotate is bound at residue S124.

This sequence belongs to the purine/pyrimidine phosphoribosyltransferase family. PyrE subfamily. In terms of assembly, homodimer. Mg(2+) is required as a cofactor.

The catalysed reaction is orotidine 5'-phosphate + diphosphate = orotate + 5-phospho-alpha-D-ribose 1-diphosphate. It participates in pyrimidine metabolism; UMP biosynthesis via de novo pathway; UMP from orotate: step 1/2. Catalyzes the transfer of a ribosyl phosphate group from 5-phosphoribose 1-diphosphate to orotate, leading to the formation of orotidine monophosphate (OMP). This is Orotate phosphoribosyltransferase from Staphylococcus aureus (strain COL).